The primary structure comprises 1342 residues: DNA-directed RNA polymerase subunit beta (1342 aa).

This sequence belongs to the RNA polymerase beta chain family. The RNAP catalytic core consists of 2 alpha, 1 beta, 1 beta' and 1 omega subunit. When a sigma factor is associated with the core the holoenzyme is formed, which can initiate transcription.

It catalyses the reaction RNA(n) + a ribonucleoside 5'-triphosphate = RNA(n+1) + diphosphate. Functionally, DNA-dependent RNA polymerase catalyzes the transcription of DNA into RNA using the four ribonucleoside triphosphates as substrates. The polypeptide is DNA-directed RNA polymerase subunit beta (Aeromonas hydrophila subsp. hydrophila (strain ATCC 7966 / DSM 30187 / BCRC 13018 / CCUG 14551 / JCM 1027 / KCTC 2358 / NCIMB 9240 / NCTC 8049)).